Consider the following 404-residue polypeptide: Zinc finger TRAF-type-containing protein 1 (404 aa).

Over residues 1 to 13 (MSGAEEAGGGGPA) the composition is skewed to gly residues. Residues 1 to 22 (MSGAEEAGGGGPAAGPAGSVPA) form a disordered region. An RING-type; degenerate zinc finger spans residues 111–156 (CTVCLDLPKASVYQCTNGHLMCAGCFIHLLADARLKEEQATCPNCR). The segment at 152-225 (CPNCRCEISK…PWHGPFHELT (74 aa)) adopts a TRAF-type zinc-finger fold.

Belongs to the ZFTRAF1 family. As to quaternary structure, interacts with LGALS3.

It is found in the cytoplasm. The protein resides in the perinuclear region. This Homo sapiens (Human) protein is Zinc finger TRAF-type-containing protein 1.